A 793-amino-acid polypeptide reads, in one-letter code: Signal transducer and activator of transcription 5A (793 aa).

Tyr-90 is subject to Phosphotyrosine. At Ser-128 the chain carries Phosphoserine. The SH2 domain occupies 589-686 (WNDGAILGFV…EVFAKYYTPV (98 aa)). A Phosphotyrosine modification is found at Tyr-682. The residue at position 694 (Tyr-694) is a Phosphotyrosine; by JAK2. A disordered region spans residues 772–793 (DSLDPRLSPPAGLFTSARSSLS). Ser-779 is modified (phosphoserine).

Belongs to the transcription factor STAT family. Forms a homodimer or a heterodimer with a related family member. Binds NR3C1. Interacts with NCOA1 and SOCS7. Interacts with ERBB4. Interacts with EBF4. Post-translationally, ISGylated. In terms of processing, tyrosine phosphorylated in response to KITLG/SCF, IL2, IL3, IL7, IL15, CSF2/GMCSF, GH1, PRL, EPO and THPO. Activated KIT promotes phosphorylation on tyrosine residues and subsequent translocation to the nucleus. Tyrosine phosphorylated in response to constitutively activated FGFR1, FGFR2, FGFR3 and FGFR4. Tyrosine phosphorylation is required for DNA-binding activity and dimerization. Serine phosphorylation is also required for maximal transcriptional activity. Tyrosine phosphorylated in response to signaling via activated FLT3; wild-type FLT3 results in much weaker phosphorylation than constitutively activated mutant FLT3. Alternatively, can be phosphorylated by JAK2 at Tyr-694. Expressed in heart, lung, and weakly in muscle.

It localises to the cytoplasm. The protein resides in the nucleus. Functionally, carries out a dual function: signal transduction and activation of transcription. Mediates cellular responses to the cytokine KITLG/SCF and other growth factors. May mediate cellular responses to activated FGFR1, FGFR2, FGFR3 and FGFR4. Binds to the GAS element and activates PRL-induced transcription. Regulates the expression of milk proteins during lactation. In Rattus norvegicus (Rat), this protein is Signal transducer and activator of transcription 5A (Stat5a).